We begin with the raw amino-acid sequence, 454 residues long: Tubulin beta-2 chain (454 aa).

GTP is bound by residues Gln-11, Glu-69, Ser-138, Gly-142, Thr-143, Gly-144, Asn-204, and Asn-226. Glu-69 serves as a coordination point for Mg(2+). Residues 426–454 (QEASVDDEAMEDDAEAEGGAGQNEAVEEF) are disordered. Over residues 429 to 441 (SVDDEAMEDDAEA) the composition is skewed to acidic residues.

Belongs to the tubulin family. In terms of assembly, dimer of alpha and beta chains. A typical microtubule is a hollow water-filled tube with an outer diameter of 25 nm and an inner diameter of 15 nM. Alpha-beta heterodimers associate head-to-tail to form protofilaments running lengthwise along the microtubule wall with the beta-tubulin subunit facing the microtubule plus end conferring a structural polarity. Microtubules usually have 13 protofilaments but different protofilament numbers can be found in some organisms and specialized cells. Mg(2+) is required as a cofactor.

The protein localises to the cytoplasm. The protein resides in the cytoskeleton. It is found in the spindle. Its subcellular location is the nucleus. Functionally, tubulin is the major constituent of microtubules, a cylinder consisting of laterally associated linear protofilaments composed of alpha- and beta-tubulin heterodimers. Microtubules grow by the addition of GTP-tubulin dimers to the microtubule end, where a stabilizing cap forms. Below the cap, tubulin dimers are in GDP-bound state, owing to GTPase activity of alpha-tubulin. In terms of biological role, this is the major beta tubulin of mitotic spindle. This Physarum polycephalum (Slime mold) protein is Tubulin beta-2 chain (BETC).